The primary structure comprises 191 residues: dTTP/UTP pyrophosphatase (191 aa).

D64 (proton acceptor) is an active-site residue.

It belongs to the Maf family. YhdE subfamily. Requires a divalent metal cation as cofactor.

Its subcellular location is the cytoplasm. It carries out the reaction dTTP + H2O = dTMP + diphosphate + H(+). The enzyme catalyses UTP + H2O = UMP + diphosphate + H(+). Functionally, nucleoside triphosphate pyrophosphatase that hydrolyzes dTTP and UTP. May have a dual role in cell division arrest and in preventing the incorporation of modified nucleotides into cellular nucleic acids. This Thermosipho africanus (strain TCF52B) protein is dTTP/UTP pyrophosphatase.